Consider the following 232-residue polypeptide: Aquaporin Z 2 (232 aa).

Transmembrane regions (helical) follow at residues 9–29 (FLGT…ASAF) and 32–52 (VGIG…TMAY). The NPA 1 motif lies at 63–65 (NPA). A run of 3 helical transmembrane segments spans residues 82–102 (VSYV…LYVI), 129–149 (LTAA…IILG), and 158–178 (GFAP…SIPV). The short motif at 184–186 (NPA) is the NPA 2 element. A helical transmembrane segment spans residues 200–220 (LSQLWLFWIAPLFGAAIAGIV).

Belongs to the MIP/aquaporin (TC 1.A.8) family. In terms of assembly, homotetramer.

It localises to the cell inner membrane. It carries out the reaction H2O(in) = H2O(out). Its function is as follows. Channel that permits osmotically driven movement of water in both directions. It is involved in the osmoregulation and in the maintenance of cell turgor during volume expansion in rapidly growing cells. It mediates rapid entry or exit of water in response to abrupt changes in osmolarity. This is Aquaporin Z 2 from Rhizobium meliloti (strain 1021) (Ensifer meliloti).